A 300-amino-acid chain; its full sequence is MAPSQLPPMFNPTPQDIEMLLAAQCHLGSKNLQVHMEPYLWKTRPDGVNVINIGKTWEKILLAARIIAAIDNPADICVISARPYGQRAVLKFASHTGATAIAGRFTPGNFTNYITRSFKEPRLIIVTDPRTDAQAIKEASYVNIPVIALCDTDSPTDFVDVAIPTNNKGRHSIGLVWWLLAREVLRLRGTLASREAEWDVVVDLYFYRDPEAEENKEIAEEAKVPGADEIGAGAVESGFAGENWETQAPGAGVPGTAFAAASAAGATSWEADGADWAASSAAAPAESWAAEAQGAEGAKW.

The interval 269–300 (WEADGADWAASSAAAPAESWAAEAQGAEGAKW) is disordered.

The protein belongs to the universal ribosomal protein uS2 family. Component of the small ribosomal subunit. Mature ribosomes consist of a small (40S) and a large (60S) subunit. The 40S subunit contains about 33 different proteins and 1 molecule of RNA (18S). The 60S subunit contains about 49 different proteins and 3 molecules of RNA (25S, 5.8S and 5S). Interacts with rps21.

It is found in the cytoplasm. Its function is as follows. Required for the assembly and/or stability of the 40S ribosomal subunit. Required for the processing of the 20S rRNA-precursor to mature 18S rRNA in a late step of the maturation of 40S ribosomal subunits. This chain is Small ribosomal subunit protein uS2 (rps0), found in Aspergillus terreus (strain NIH 2624 / FGSC A1156).